The following is a 224-amino-acid chain: IAP-like protein p27 (224 aa).

One copy of the BIR repeat lies at 29–92; it reads VDARNQSFAI…GFWSRNCGFM (64 aa). Zn(2+) is bound by residues cysteine 62, cysteine 65, histidine 82, and cysteine 89.

In terms of biological role, not essential for growth or virulence. Does not have antiapoptotic function. The sequence is that of IAP-like protein p27 (p27) from Ornithodoros (relapsing fever ticks).